The following is a 194-amino-acid chain: Large ribosomal subunit protein bL9 (194 aa).

The tract at residues 169–194 is disordered; sequence DDINDNARPENFFDPNAEFDGGEDNA.

This sequence belongs to the bacterial ribosomal protein bL9 family.

In terms of biological role, binds to the 23S rRNA. The polypeptide is Large ribosomal subunit protein bL9 (Mesorhizobium japonicum (strain LMG 29417 / CECT 9101 / MAFF 303099) (Mesorhizobium loti (strain MAFF 303099))).